Consider the following 199-residue polypeptide: Peroxisomal membrane protein PEX17 (199 aa).

It is found in the peroxisome membrane. In terms of biological role, component of the peroxisomal translocation machinery with PEX13 and PEX14. Interacts indirectly with the PTS1 receptor (PAS10/PEX5) and directly binds to PEX14. Required for import of both PTS1 and PTS2 proteins. In Saccharomyces cerevisiae (strain ATCC 204508 / S288c) (Baker's yeast), this protein is Peroxisomal membrane protein PEX17 (PEX17).